We begin with the raw amino-acid sequence, 116 residues long: Ig heavy chain V region 441 (116 aa).

An N-terminal signal peptide occupies residues 1–18 (MDFGLIFFIVALLKGVQC). The region spanning 19–116 (EVKLLESGGG…EDTALYYCAR (98 aa)) is the Ig-like domain.

This is Ig heavy chain V region 441 from Mus musculus (Mouse).